We begin with the raw amino-acid sequence, 359 residues long: Mitochondrial glutathione transporter SLC25A39 (359 aa).

At 1 to 14 (MDDQDPGGISPLQQ) the chain is on the mitochondrial intermembrane side. Solcar repeat units follow at residues 9 to 151 (ISPL…LKAF), 159 to 243 (SDLY…VKSQ), and 253 to 347 (TSVG…GKSF). The helical transmembrane segment at 15–35 (MVASGAGAVVTSLFMTPLDVV) threads the bilayer. Topologically, residues 36 to 121 (KVRLQSQRPT…VKIVRHEGTR (86 aa)) are mitochondrial matrix. 4 residues coordinate [2Fe-2S] cluster: cysteine 74, cysteine 78, cysteine 88, and cysteine 94. The helical transmembrane segment at 122 to 142 (TLWSGLPATLVMTVPATAIYF) threads the bilayer. Residues 143 to 164 (TAYDQLKAFLCGQSLTSDLYAP) are Mitochondrial intermembrane-facing. Residues 165–185 (MVAGALARMGTVTVVSPLELV) traverse the membrane as a helical segment. Residues 186-214 (RTKLQAQHVSYRELAACVQAAVAQGGWRS) lie on the Mitochondrial matrix side of the membrane. A helical transmembrane segment spans residues 215–235 (LWLGWGPTALRDVPFSALYWF). The Mitochondrial intermembrane segment spans residues 236–255 (NYELVKSQLNGPRQKEQTSV). A helical membrane pass occupies residues 256-276 (GISFVAGGISGMVAATLTLPF). The Mitochondrial matrix segment spans residues 277 to 317 (DVVKTQRQMSLGAVEAMRVKPPRVDSTWLLLRRIQAESGTR). Residues 318–338 (GLFAGFLPRIIKAAPSCAIMI) traverse the membrane as a helical segment. At 339–359 (STYEFGKSFFHRLNQEQPLGH) the chain is on the mitochondrial intermembrane side.

Belongs to the mitochondrial carrier (TC 2.A.29) family. Post-translationally, cleaved and degraded by AFG3L2; degradation by AFG3L2 is regulated by the ability of SLC25A39 to bind iron-sulfur. In absence of mitochondrial glutathione, SLC25A39 binds iron-sulfur, preventing cleavage and degradation by AFG3L2. The presence of mitochondrial glutathione prevents iron-sulfur-binding to SLC25A39, promoting cleavage and degradation by AFG3L2.

The protein localises to the mitochondrion inner membrane. It catalyses the reaction glutathione(in) = glutathione(out). With respect to regulation, the activity of SLC25A39 is regulated by levels of mitochondrial glutathione via its ability to bind [2Fe-2S] iron-sulfur cluster. Upon physiological levels of mitochondrial glutathione, glutathione prevents iron-sulfur-binding to SLC25A39 promoting cleavage and degradation by AFG3L2. Upon depletion of mitochondrial glutathione, SLC25A39 binds iron-sulfur, preventing cleavage and degradation by AFG3L2. Mitochondrial transporter required for glutathione import into mitochondria. Glutathione, which plays key roles in oxidative metabolism, is produced exclusively in the cytosol and is imported in many organelles. Mitochondrial glutathione is required for the activity and stability of proteins containing iron-sulfur clusters, as well as erythropoiesis. This chain is Mitochondrial glutathione transporter SLC25A39 (Slc25a39), found in Rattus norvegicus (Rat).